A 465-amino-acid chain; its full sequence is 3-isopropylmalate dehydratase large subunit (465 aa).

Residues cysteine 346, cysteine 406, and cysteine 409 each coordinate [4Fe-4S] cluster.

This sequence belongs to the aconitase/IPM isomerase family. LeuC type 1 subfamily. In terms of assembly, heterodimer of LeuC and LeuD. The cofactor is [4Fe-4S] cluster.

The enzyme catalyses (2R,3S)-3-isopropylmalate = (2S)-2-isopropylmalate. Its pathway is amino-acid biosynthesis; L-leucine biosynthesis; L-leucine from 3-methyl-2-oxobutanoate: step 2/4. Its function is as follows. Catalyzes the isomerization between 2-isopropylmalate and 3-isopropylmalate, via the formation of 2-isopropylmaleate. This chain is 3-isopropylmalate dehydratase large subunit, found in Psychromonas ingrahamii (strain DSM 17664 / CCUG 51855 / 37).